A 284-amino-acid polypeptide reads, in one-letter code: Pseudomurein endoisopeptidase PeiW (284 aa).

4 pseudomurein-binding repeat regions span residues 4–31 (GLNE…YVTT), 34–65 (GYKV…YISI), 70–100 (NGKI…NIIY), and 106–137 (SDHV…YISI). Residues cysteine 198, histidine 233, and aspartate 250 contribute to the active site.

Belongs to the Psimunavirus Pseudomurein endoisopeptidase family. Monomer. Ca(2+) serves as cofactor. It depends on Mg(2+) as a cofactor.

In terms of biological role, cysteine protease that cleaves the cell wall of its host methanogen under hydrogen limitation of the latter (autolysis). Cleaves the epsilon-Ala-Lys isopeptide bond in the oligopeptides of pseudomurein. The sequence is that of Pseudomurein endoisopeptidase PeiW (peiW) from Methanothermobacter phage psiM100.